A 577-amino-acid polypeptide reads, in one-letter code: Sulfite reductase [NADPH] hemoprotein beta-component (577 aa).

Residues Cys436, Cys442, Cys481, and Cys485 each coordinate [4Fe-4S] cluster. Cys485 lines the siroheme pocket.

It belongs to the nitrite and sulfite reductase 4Fe-4S domain family. As to quaternary structure, alpha(8)-beta(8). The alpha component is a flavoprotein, the beta component is a hemoprotein. The cofactor is siroheme. It depends on [4Fe-4S] cluster as a cofactor.

It carries out the reaction hydrogen sulfide + 3 NADP(+) + 3 H2O = sulfite + 3 NADPH + 4 H(+). It functions in the pathway sulfur metabolism; hydrogen sulfide biosynthesis; hydrogen sulfide from sulfite (NADPH route): step 1/1. In terms of biological role, component of the sulfite reductase complex that catalyzes the 6-electron reduction of sulfite to sulfide. This is one of several activities required for the biosynthesis of L-cysteine from sulfate. In Shewanella woodyi (strain ATCC 51908 / MS32), this protein is Sulfite reductase [NADPH] hemoprotein beta-component.